The chain runs to 453 residues: Ribosomal protein uS12 methylthiotransferase RimO (453 aa).

Residues 9-124 form the MTTase N-terminal domain; that stretch reads PKVGFVSLGC…VMEAVHTHLP (116 aa). C18, C54, C83, C155, C159, and C162 together coordinate [4Fe-4S] cluster. Positions 141–382 constitute a Radical SAM core domain; it reads LTPKHYAYLK…MEVAERVSAR (242 aa). Positions 385–453 constitute a TRAM domain; the sequence is QRKVGKSLRV…ADGHDLWGEV (69 aa).

The protein belongs to the methylthiotransferase family. RimO subfamily. It depends on [4Fe-4S] cluster as a cofactor.

It localises to the cytoplasm. The enzyme catalyses L-aspartate(89)-[ribosomal protein uS12]-hydrogen + (sulfur carrier)-SH + AH2 + 2 S-adenosyl-L-methionine = 3-methylsulfanyl-L-aspartate(89)-[ribosomal protein uS12]-hydrogen + (sulfur carrier)-H + 5'-deoxyadenosine + L-methionine + A + S-adenosyl-L-homocysteine + 2 H(+). Functionally, catalyzes the methylthiolation of an aspartic acid residue of ribosomal protein uS12. The sequence is that of Ribosomal protein uS12 methylthiotransferase RimO from Ralstonia pickettii (strain 12J).